Here is a 386-residue protein sequence, read N- to C-terminus: Succinate--CoA ligase [ADP-forming] subunit beta (386 aa).

One can recognise an ATP-grasp domain in the interval 9 to 244; that stretch reads KEILRKYGVP…HDEEDPLETR (236 aa). Residues lysine 46, 53 to 55, glutamate 99, cysteine 102, and glutamate 107 contribute to the ATP site; that span reads GRG. 2 residues coordinate Mg(2+): asparagine 199 and aspartate 213. Residues asparagine 264 and 321–323 each bind substrate; that span reads GIM.

It belongs to the succinate/malate CoA ligase beta subunit family. As to quaternary structure, heterotetramer of two alpha and two beta subunits. Mg(2+) serves as cofactor.

It carries out the reaction succinate + ATP + CoA = succinyl-CoA + ADP + phosphate. It catalyses the reaction GTP + succinate + CoA = succinyl-CoA + GDP + phosphate. Its pathway is carbohydrate metabolism; tricarboxylic acid cycle; succinate from succinyl-CoA (ligase route): step 1/1. Functionally, succinyl-CoA synthetase functions in the citric acid cycle (TCA), coupling the hydrolysis of succinyl-CoA to the synthesis of either ATP or GTP and thus represents the only step of substrate-level phosphorylation in the TCA. The beta subunit provides nucleotide specificity of the enzyme and binds the substrate succinate, while the binding sites for coenzyme A and phosphate are found in the alpha subunit. This chain is Succinate--CoA ligase [ADP-forming] subunit beta, found in Rickettsia typhi (strain ATCC VR-144 / Wilmington).